A 146-amino-acid polypeptide reads, in one-letter code: UPF0735 ACT domain-containing protein TTE2621 (146 aa).

The ACT domain maps to 71-146; sequence TFSMVLEHMP…GVRKIEVLGE (76 aa).

Belongs to the UPF0735 family.

In Caldanaerobacter subterraneus subsp. tengcongensis (strain DSM 15242 / JCM 11007 / NBRC 100824 / MB4) (Thermoanaerobacter tengcongensis), this protein is UPF0735 ACT domain-containing protein TTE2621.